Here is a 137-residue protein sequence, read N- to C-terminus: ATP synthase epsilon chain (137 aa).

The protein belongs to the ATPase epsilon chain family. In terms of assembly, F-type ATPases have 2 components, CF(1) - the catalytic core - and CF(0) - the membrane proton channel. CF(1) has five subunits: alpha(3), beta(3), gamma(1), delta(1), epsilon(1). CF(0) has three main subunits: a, b and c.

It localises to the cellular thylakoid membrane. Functionally, produces ATP from ADP in the presence of a proton gradient across the membrane. The polypeptide is ATP synthase epsilon chain (atpC) (Synechococcus elongatus (strain ATCC 33912 / PCC 7942 / FACHB-805) (Anacystis nidulans R2)).